Here is a 360-residue protein sequence, read N- to C-terminus: Phospho-N-acetylmuramoyl-pentapeptide-transferase (360 aa).

The next 10 membrane-spanning stretches (helical) occupy residues 21–41 (YVTF…LWWG), 74–94 (MGGI…GDLG), 97–117 (YVWV…IDDY), 135–155 (ILQS…ADTV), 168–188 (IMPQ…VGSS), 199–219 (GLAI…AYLS), 236–256 (AGEL…FLWF), 263–283 (VFMG…IAVL), 288–308 (ILLV…ILQV), and 338–358 (VIVR…ATLK).

Belongs to the glycosyltransferase 4 family. MraY subfamily. It depends on Mg(2+) as a cofactor.

It localises to the cell inner membrane. It carries out the reaction UDP-N-acetyl-alpha-D-muramoyl-L-alanyl-gamma-D-glutamyl-meso-2,6-diaminopimeloyl-D-alanyl-D-alanine + di-trans,octa-cis-undecaprenyl phosphate = di-trans,octa-cis-undecaprenyl diphospho-N-acetyl-alpha-D-muramoyl-L-alanyl-D-glutamyl-meso-2,6-diaminopimeloyl-D-alanyl-D-alanine + UMP. It functions in the pathway cell wall biogenesis; peptidoglycan biosynthesis. Functionally, catalyzes the initial step of the lipid cycle reactions in the biosynthesis of the cell wall peptidoglycan: transfers peptidoglycan precursor phospho-MurNAc-pentapeptide from UDP-MurNAc-pentapeptide onto the lipid carrier undecaprenyl phosphate, yielding undecaprenyl-pyrophosphoryl-MurNAc-pentapeptide, known as lipid I. The sequence is that of Phospho-N-acetylmuramoyl-pentapeptide-transferase from Shewanella violacea (strain JCM 10179 / CIP 106290 / LMG 19151 / DSS12).